A 313-amino-acid chain; its full sequence is Protein sprouty homolog 2 (313 aa).

Polar residues predominate over residues methionine 1–leucine 14. 2 disordered regions span residues methionine 1–arginine 31 and glutamate 54–glycine 146. Basic and acidic residues-rich tracts occupy residues alanine 17–arginine 31 and lysine 78–arginine 89. Positions serine 108 to serine 131 are enriched in low complexity. Over residues glutamate 132 to glycine 141 the composition is skewed to polar residues. The 115-residue stretch at arginine 175–cysteine 289 folds into the SPR domain.

The protein belongs to the sprouty family. In terms of tissue distribution, brain and interlimb region.

Its subcellular location is the cytoplasm. It localises to the membrane. In terms of biological role, acts as an antagonist of FGF-induced retinal lens fiber differentiation. Inhibits TGFB-induced epithelial-to-mesenchymal transition in retinal lens epithelial cells. May play an important role in FGF-mediated patterning of the mid/hindbrain region by acting to modulate the signaling effects of FGF8. This chain is Protein sprouty homolog 2 (SPRY2), found in Gallus gallus (Chicken).